The primary structure comprises 57 residues: Large ribosomal subunit protein bL32 (57 aa).

Residues 1–23 (MAVPARHTSSAKKNRRRTHYKLT) are disordered. Over residues 9–20 (SSAKKNRRRTHY) the composition is skewed to basic residues.

It belongs to the bacterial ribosomal protein bL32 family.

This Lactococcus lactis subsp. cremoris (strain MG1363) protein is Large ribosomal subunit protein bL32.